The primary structure comprises 219 residues: 3,4-dihydroxy-2-butanone 4-phosphate synthase (219 aa).

D-ribulose 5-phosphate contacts are provided by residues 28–29 (RE), D33, 140–144 (REGHT), and E164. E29 is a binding site for Mg(2+). H143 provides a ligand contact to Mg(2+).

The protein belongs to the DHBP synthase family. As to quaternary structure, homodimer. Mg(2+) serves as cofactor. The cofactor is Mn(2+).

It catalyses the reaction D-ribulose 5-phosphate = (2S)-2-hydroxy-3-oxobutyl phosphate + formate + H(+). It participates in cofactor biosynthesis; riboflavin biosynthesis; 2-hydroxy-3-oxobutyl phosphate from D-ribulose 5-phosphate: step 1/1. In terms of biological role, catalyzes the conversion of D-ribulose 5-phosphate to formate and 3,4-dihydroxy-2-butanone 4-phosphate. This chain is 3,4-dihydroxy-2-butanone 4-phosphate synthase, found in Methanocorpusculum labreanum (strain ATCC 43576 / DSM 4855 / Z).